Consider the following 455-residue polypeptide: Pre-mRNA-processing factor 17 (455 aa).

A disordered region spans residues 1 to 89 (MGLVDGYDTS…SQASETQKED (89 aa)). Basic and acidic residues predominate over residues 18–35 (DEGKSVHEKKNGNLHEDT). Positions 44–63 (IHKRKSHFTKSELKRRRKTR) are enriched in basic residues. 6 WD repeats span residues 160 to 200 (GHPE…ECLR), 204 to 243 (GHNKPIKALRFTEDCQSFLSSSFDRSVKIWDTETGKVKTR), 291 to 330 (HHLSSILALKYFPDGSKFISSSEDKTVRIWENQINVPIKQ), 334 to 373 (TAQHSMPFLNVHPSQNYFCAQSMDNRIYSFSLKPKYKRHP), 379 to 422 (GHSS…NNIK), and 424 to 454 (PGNKPITQVDWHPQETSKVICSGAAGKIYVC).

As to quaternary structure, belongs to the CWC complex (or CEF1-associated complex), a spliceosome sub-complex reminiscent of a late-stage spliceosome composed of the U2, U5 and U6 snRNAs and at least BUD13, BUD31, BRR2, CDC40, CEF1, CLF1, CUS1, CWC2, CWC15, CWC21, CWC22, CWC23, CWC24, CWC25, CWC27, ECM2, HSH155, IST3, ISY1, LEA1, MSL1, NTC20, PRP8, PRP9, PRP11, PRP19, PRP21, PRP22, PRP45, PRP46, SLU7, SMB1, SMD1, SMD2, SMD3, SMX2, SMX3, SNT309, SNU114, SPP2, SYF1, SYF2, RSE1 and YJU2.

It is found in the nucleus. Functionally, may function in the second step of pre-mRNA splicing. Regulatory protein involved in replication and mitotic spindle formation and/or maintenance. Required for initiation and completion of S-phase and for initiation and completion of DNA replication. Might be required for the maintenance of microtubules. Essential only at elevated temperatures. The chain is Pre-mRNA-processing factor 17 (CDC40) from Saccharomyces cerevisiae (strain ATCC 204508 / S288c) (Baker's yeast).